Reading from the N-terminus, the 341-residue chain is Glycerol-3-phosphate dehydrogenase [NAD(P)+] 1 (341 aa).

NADPH-binding residues include S17, W18, R37, and K112. 2 residues coordinate sn-glycerol 3-phosphate: K112 and G140. A144 serves as a coordination point for NADPH. Sn-glycerol 3-phosphate is bound by residues K195, D248, S258, R259, and N260. K195 functions as the Proton acceptor in the catalytic mechanism. R259 is a binding site for NADPH. Positions 283 and 285 each coordinate NADPH.

This sequence belongs to the NAD-dependent glycerol-3-phosphate dehydrogenase family.

It is found in the cytoplasm. It catalyses the reaction sn-glycerol 3-phosphate + NAD(+) = dihydroxyacetone phosphate + NADH + H(+). The enzyme catalyses sn-glycerol 3-phosphate + NADP(+) = dihydroxyacetone phosphate + NADPH + H(+). Its pathway is membrane lipid metabolism; glycerophospholipid metabolism. Functionally, catalyzes the reduction of the glycolytic intermediate dihydroxyacetone phosphate (DHAP) to sn-glycerol 3-phosphate (G3P), the key precursor for phospholipid synthesis. The protein is Glycerol-3-phosphate dehydrogenase [NAD(P)+] 1 of Mycobacterium bovis (strain ATCC BAA-935 / AF2122/97).